The following is a 202-amino-acid chain: ATP-dependent Clp protease proteolytic subunit (202 aa).

Serine 106 acts as the Nucleophile in catalysis. Residue histidine 131 is part of the active site.

This sequence belongs to the peptidase S14 family. In terms of assembly, fourteen ClpP subunits assemble into 2 heptameric rings which stack back to back to give a disk-like structure with a central cavity, resembling the structure of eukaryotic proteasomes.

It localises to the cytoplasm. It carries out the reaction Hydrolysis of proteins to small peptides in the presence of ATP and magnesium. alpha-casein is the usual test substrate. In the absence of ATP, only oligopeptides shorter than five residues are hydrolyzed (such as succinyl-Leu-Tyr-|-NHMec, and Leu-Tyr-Leu-|-Tyr-Trp, in which cleavage of the -Tyr-|-Leu- and -Tyr-|-Trp bonds also occurs).. In terms of biological role, cleaves peptides in various proteins in a process that requires ATP hydrolysis. Has a chymotrypsin-like activity. Plays a major role in the degradation of misfolded proteins. The polypeptide is ATP-dependent Clp protease proteolytic subunit (Shewanella sp. (strain MR-7)).